The chain runs to 471 residues: PE-PGRS family protein PE_PGRS33 (471 aa).

The interval 1–30 is essential for translocation to the cell surface; that stretch reads MSFVVTIPEALAAVATDLAGIGSTIGTANA. The region spanning 1 to 93 is the PE domain; that stretch reads MSFVVTIPEA…AGSYAAAEAA (93 aa). Positions 140-230 are interacts with TLR2; sequence GNGGAGGSGA…GLFFGVGGAG (91 aa).

This sequence belongs to the mycobacterial PE family. PGRS subfamily. Interacts with human TLR2.

Its subcellular location is the secreted. The protein resides in the cell wall. The protein localises to the cell surface. It localises to the cell outer membrane. Functionally, induces TNF-alpha release through human Toll-like receptor 2 (TLR2) signaling pathway, leading to macrophage apoptosis. The chain is PE-PGRS family protein PE_PGRS33 (PE_PGRS33) from Mycobacterium tuberculosis (strain CDC 1551 / Oshkosh).